We begin with the raw amino-acid sequence, 175 residues long: Ribulose bisphosphate carboxylase small subunit, chloroplastic 2 (175 aa).

A chloroplast-targeting transit peptide spans 1–46 (MAPTVMASSATSVAPFQGLKSTAGLPVSRRSTNSGFGNVSNGGRIK).

Belongs to the RuBisCO small chain family. Heterohexadecamer of 8 large and 8 small subunits.

The protein localises to the plastid. It is found in the chloroplast. RuBisCO catalyzes two reactions: the carboxylation of D-ribulose 1,5-bisphosphate, the primary event in carbon dioxide fixation, as well as the oxidative fragmentation of the pentose substrate. Both reactions occur simultaneously and in competition at the same active site. Although the small subunit is not catalytic it is essential for maximal activity. The protein is Ribulose bisphosphate carboxylase small subunit, chloroplastic 2 of Oryza sativa subsp. japonica (Rice).